Here is a 93-residue protein sequence, read N- to C-terminus: NADH-ubiquinone oxidoreductase chain 4L (93 aa).

The next 3 helical transmembrane spans lie at 2-22 (ALYE…GFVL), 27-47 (IILM…LVLV), and 62-82 (IYII…LVAY).

The protein belongs to the complex I subunit 4L family.

The protein resides in the mitochondrion inner membrane. The enzyme catalyses a ubiquinone + NADH + 5 H(+)(in) = a ubiquinol + NAD(+) + 4 H(+)(out). Functionally, core subunit of the mitochondrial membrane respiratory chain NADH dehydrogenase (Complex I) that is believed to belong to the minimal assembly required for catalysis. Complex I functions in the transfer of electrons from NADH to the respiratory chain. The immediate electron acceptor for the enzyme is believed to be ubiquinone. This Mycosarcoma maydis (Corn smut fungus) protein is NADH-ubiquinone oxidoreductase chain 4L (ND4L).